Reading from the N-terminus, the 478-residue chain is MKLFPLCLSALVMSTATCASSVEGAIEKVPQSLEQKGPSEMLSMKPDVKGGFGDRMMFIPFQSDLGLHSPVDRSGFEYCGYLDAIESEDGDSSRAPYAKLQLKENVEGIARFGLFYHPSPFQAFKHIIDNGGKYSGLDRVFLENLRKSLVVSLDSAVNRTYSIPVEDEGFYCFVGYQEVAHQETVIGENSEPIVTIEFDSFNSNVPVTLKLQRQIFLSFSIVYGLISLWWAIRCICSRTKLHLVQVCLFCWFSFFILNHPVKQRIFSIDNPDEYLVPFVVSCFTYFLGDGIEYALYSLFITTTVLGFGTIRRTSKKMVLFFSLLTCGQAFLVNVAPMVYPLLYISGSDKACVLRMVWVFNKFLYLPLITFLGAVLAFRFRLKKASQFDTRWNLFALTLAIIILFAFNDLVIFDKLQKLWKYDDTTLEYLKIVNGGIKFVAFSILLGPYSKLFAEPKSLQLDDFLGKHDGHKDPSLEKF.

An N-terminal signal peptide occupies residues M1–A19. The Lumenal segment spans residues S20–Q214. Residues I215–I235 traverse the membrane as a helical segment. Over C236 to K240 the chain is Cytoplasmic. The helical transmembrane segment at L241 to V261 threads the bilayer. Topologically, residues K262–D289 are lumenal. The helical transmembrane segment at G290–I310 threads the bilayer. At R311 to M317 the chain is on the cytoplasmic side. Residues V318–V338 traverse the membrane as a helical segment. Residues Y339–V356 are Lumenal-facing. Residues W357–F377 traverse the membrane as a helical segment. The Cytoplasmic portion of the chain corresponds to R378–W391. Residues N392–F412 traverse the membrane as a helical segment. Residues D413 to E427 lie on the Lumenal side of the membrane. Residues Y428–Y448 traverse the membrane as a helical segment. Residues S449–F478 lie on the Cytoplasmic side of the membrane.

The protein resides in the endoplasmic reticulum membrane. The protein localises to the golgi apparatus membrane. This is an uncharacterized protein from Schizosaccharomyces pombe (strain 972 / ATCC 24843) (Fission yeast).